A 277-amino-acid polypeptide reads, in one-letter code: Carbonyl reductase [NADPH] 3 (277 aa).

Serine 2 carries the N-acetylserine modification. Residues 10-34 (VTGANKGIGFAITRDLCRKFSGDVV), 38-42 (RDEAR), 63-64 (DI), and asparagine 90 each bind NADP(+). Serine 30 is subject to Phosphoserine. Serine 140 contributes to the substrate binding site. The active-site Proton acceptor is tyrosine 194. 194 to 198 (YGVSK) is an NADP(+) binding site.

It belongs to the short-chain dehydrogenases/reductases (SDR) family.

Its subcellular location is the cytoplasm. It catalyses the reaction a secondary alcohol + NADP(+) = a ketone + NADPH + H(+). It carries out the reaction a quinone + NADPH + H(+) = a quinol + NADP(+). In terms of biological role, catalyzes the NADPH-dependent reduction of carbonyl compounds to their corresponding alcohols. Has low NADPH-dependent oxidoreductase activity. Acts on several orthoquinones, as well as on non-quinone compounds, such as isatin or on the anticancer drug oracin. Best substrates for CBR3 is 1,2- naphthoquinone, hence could play a role in protection against cytotoxicity of exogenous quinones. Exerts activity toward ortho-quinones but not paraquinones. No endogenous substrate for CBR3 except isatin has been identified. The protein is Carbonyl reductase [NADPH] 3 (Cbr3) of Mus musculus (Mouse).